Consider the following 267-residue polypeptide: tRNA pseudouridine synthase A (267 aa).

The Nucleophile role is filled by Asp-53. Substrate is bound at residue Tyr-111.

The protein belongs to the tRNA pseudouridine synthase TruA family. In terms of assembly, homodimer.

It catalyses the reaction uridine(38/39/40) in tRNA = pseudouridine(38/39/40) in tRNA. In terms of biological role, formation of pseudouridine at positions 38, 39 and 40 in the anticodon stem and loop of transfer RNAs. In Alcanivorax borkumensis (strain ATCC 700651 / DSM 11573 / NCIMB 13689 / SK2), this protein is tRNA pseudouridine synthase A.